We begin with the raw amino-acid sequence, 894 residues long: RNA polymerase I-specific transcription initiation factor RRN6 (894 aa).

The segment at 803–894 (PPFNLNSQSQ…KKKKRIRGFG (92 aa)) is disordered. Composition is skewed to polar residues over residues 806 to 823 (NLNS…QSSG), 832 to 849 (KTQS…QNLS), and 863 to 880 (QPPS…PRNS). Over residues 881-894 (QKAKKKKKRIRGFG) the composition is skewed to basic residues.

Component of the core factor (CF) complex, which consists of RRN6, RRN7 and RRN11. The CF heterotrimer may further dimerize to form a hexamer. RRN6 interacts with RRN7, RRN11 and RRN9.

The protein resides in the cytoplasm. It is found in the nucleus. It localises to the nucleolus. Its function is as follows. Acts as a component of the core factor (CF) complex which is essential for the initiation of rDNA transcription by RNA polymerase I. After binding of UAF (upstream activation factor) to an upstream element of the promoter, CF is recruited in a SPT15/TBP-dependent manner to form a preinitiation complex. The polypeptide is RNA polymerase I-specific transcription initiation factor RRN6 (RRN6) (Saccharomyces cerevisiae (strain ATCC 204508 / S288c) (Baker's yeast)).